The following is a 418-amino-acid chain: Dihydrolipoyllysine-residue acetyltransferase component of pyruvate dehydrogenase complex (418 aa).

One can recognise a Lipoyl-binding domain in the interval 2 to 78 (PIKLLMPALS…PVNSLIAVLI (77 aa)). An N6-lipoyllysine modification is found at lysine 43. Residues 133 to 170 (FASPLAKRLAKIQNVRIEEIKGSGPHGRIIKQDVLSHK) enclose the Peripheral subunit-binding (PSBD) domain. Residue histidine 388 is part of the active site.

Belongs to the 2-oxoacid dehydrogenase family. In terms of assembly, forms a 24-polypeptide structural core with octahedral symmetry. (R)-lipoate serves as cofactor.

It catalyses the reaction N(6)-[(R)-dihydrolipoyl]-L-lysyl-[protein] + acetyl-CoA = N(6)-[(R)-S(8)-acetyldihydrolipoyl]-L-lysyl-[protein] + CoA. Its function is as follows. The pyruvate dehydrogenase complex catalyzes the overall conversion of pyruvate to acetyl-CoA and CO(2). It contains multiple copies of three enzymatic components: pyruvate dehydrogenase (E1), dihydrolipoamide acetyltransferase (E2) and lipoamide dehydrogenase (E3). The sequence is that of Dihydrolipoyllysine-residue acetyltransferase component of pyruvate dehydrogenase complex (pdhC) from Rickettsia bellii (strain RML369-C).